The following is a 200-amino-acid chain: MKLKSIMSQCQFIIGATSIKSLPDFSIPEVALAGRSNVGKSSLINAITNNRKNARISSKPGCTRQINFYLINKGLMVLVDLPGYGYSKADRATVNSYICLMEYYLLNRKNLSKVVLLIDAKVGFKEIDLDFIRWLEVHQILYQLVLTKIDRVQSNVLDVIVSDVQNFNLNFIIYPIINVSSKCKQGIEELIYEIAQCIKK.

Residues 26–200 (SIPEVALAGR…IYEIAQCIKK (175 aa)) form the EngB-type G domain. GTP is bound by residues 34–41 (GRSNVGKS), 61–65 (GCTRQ), 80–83 (DLPG), 147–150 (TKID), and 179–181 (VSS). Mg(2+) is bound by residues serine 41 and threonine 63.

Belongs to the TRAFAC class TrmE-Era-EngA-EngB-Septin-like GTPase superfamily. EngB GTPase family. It depends on Mg(2+) as a cofactor.

In terms of biological role, necessary for normal cell division and for the maintenance of normal septation. The polypeptide is Probable GTP-binding protein EngB (Ehrlichia ruminantium (strain Gardel)).